The following is a 184-amino-acid chain: Troponin I, slow skeletal muscle (184 aa).

At Pro-1 the chain carries N-acetylproline; partial. The involved in binding TNC stretch occupies residues 1–45 (PEVERKSKITASRKLLKSLMLAKAKECQQEHEAREAEKVRYLAER). The residue at position 55 (Ser-55) is a Phosphoserine. The segment at 94–115 (LKLKVLDLRGKFKRPPLRRVRV) is involved in binding TNC and actin.

Belongs to the troponin I family. In terms of assembly, binds to actin and tropomyosin. In the muscle sample, approximately 25% of the chains were blocked. Pro-1 is probably acetylated. Post-translationally, the N-terminus is blocked.

Functionally, troponin I is the inhibitory subunit of troponin, the thin filament regulatory complex which confers calcium-sensitivity to striated muscle actomyosin ATPase activity. This chain is Troponin I, slow skeletal muscle (TNNI1), found in Oryctolagus cuniculus (Rabbit).